We begin with the raw amino-acid sequence, 285 residues long: MRRNIILKAPAKVNLTLDVKGKRSDGYHELETVMHQVNLLDIIIISQAAGGIQIKSNSSLIPTNEENLAYQAAEMILGEYAHKEGVEIYIEKNIPVGAGLAGGSTDAAAVILGINQLYDLGLEEEELLEMAASIGSDVAFCLAGGSKLARGRGEILSKLPQRMIPYIILVKPDFQLSTAEVYRELDLTQVEEFPDNAAFLAAWEAYDIINIARNMRNVLETVSIRKYPEIAAIKAELIETGALNALMSGSGPSVMGIFMEEEQALKAREKFQTRYQEVFLLSSYV.

Lys12 is a catalytic residue. Pro95–Thr105 contacts ATP. The active site involves Asp137.

Belongs to the GHMP kinase family. IspE subfamily.

The enzyme catalyses 4-CDP-2-C-methyl-D-erythritol + ATP = 4-CDP-2-C-methyl-D-erythritol 2-phosphate + ADP + H(+). Its pathway is isoprenoid biosynthesis; isopentenyl diphosphate biosynthesis via DXP pathway; isopentenyl diphosphate from 1-deoxy-D-xylulose 5-phosphate: step 3/6. Catalyzes the phosphorylation of the position 2 hydroxy group of 4-diphosphocytidyl-2C-methyl-D-erythritol. The protein is 4-diphosphocytidyl-2-C-methyl-D-erythritol kinase of Syntrophomonas wolfei subsp. wolfei (strain DSM 2245B / Goettingen).